Consider the following 451-residue polypeptide: Tubulin gamma-2 chain (451 aa).

The residue at position 131 (S131) is a Phosphoserine; by BRSK1. Position 142 to 148 (142 to 148 (AGGTGSG)) interacts with GTP.

The protein belongs to the tubulin family. Component of the gamma-tubulin ring complex (gTuRC) consisting of TUBGCP2, TUBGCP3, TUBGCP4, TUBGCP5 and TUBGCP6 and gamma-tubulin TUBG1 or TUBG2. TUBGCP2, TUBGCP3, TUBGCP4, TUBGCP5 and TUBGCP6 assemble in a 5:5:2:1:1 stoichiometry; each is associated with a gamma-tubulin, thereby arranging 14 gamma-tubulins in a helical manner. Gamma-tubulin at the first position is blocked by TUBGCP3 at the last position, allowing 13 protafilaments to grow into a microtubule. Interacts with alpha-beta tubulin heterodimers; the interaction allows microtubules to nucleate from the gTuRC. Post-translationally, phosphorylation at Ser-131 by BRSK1 regulates centrosome duplication, possibly by mediating relocation of gamma-tubulin and its associated proteins from the cytoplasm to the centrosome.

It is found in the cytoplasm. The protein localises to the cytoskeleton. The protein resides in the microtubule organizing center. Its subcellular location is the centrosome. In terms of biological role, tubulin is the major constituent of microtubules, protein filaments consisting of alpha- and beta-tubulin heterodimers. Gamma-tubulin is a key component of the gamma-tubulin ring complex (gTuRC) which mediates microtubule nucleation. The gTuRC regulates the minus-end nucleation of alpha-beta tubulin heterodimers that grow into microtubule protafilaments, a critical step in centrosome duplication and spindle formation. The protein is Tubulin gamma-2 chain (TUBG2) of Homo sapiens (Human).